Here is a 514-residue protein sequence, read N- to C-terminus: Intracellular exo-alpha-L-arabinofuranosidase (514 aa).

2 residues coordinate alpha-L-arabinofuranose: Glu-47 and Asn-194. Glu-195 (proton donor/acceptor) is an active-site residue. Tyr-261, Glu-317, and Gln-366 together coordinate alpha-L-arabinofuranose. Catalysis depends on Glu-317, which acts as the Nucleophile.

It belongs to the glycosyl hydrolase 51 family. As to quaternary structure, homohexamer; trimer of dimers.

It localises to the cytoplasm. The enzyme catalyses Hydrolysis of terminal non-reducing alpha-L-arabinofuranoside residues in alpha-L-arabinosides.. It functions in the pathway glycan metabolism; L-arabinan degradation. Involved in the degradation of arabinan and is a key enzyme in the complete degradation of the plant cell wall. Catalyzes the cleavage of terminal alpha-L-arabinofuranosyl residues in different hemicellulosic homopolysaccharides (branched and debranched arabinans) and heteropolysaccharides (arabinoxylans). The polypeptide is Intracellular exo-alpha-L-arabinofuranosidase (asdII) (Bacteroides ovatus).